The sequence spans 296 residues: MIKVYNRITKEYEEENVAGKKFIKWTYETPVGKSITELIAKRKIFSKFYGKFCDTKRSAKKIPDFVENFNIDMNIAEKNISDFNSFNDFFVRNLIPTSRPIDTNENILISPGDGRITVYDNIDLDNIVQIKGLTYSLRELIKNDQITENYKDGICIILRLCPTDYHRFHFVDSGIPCETHKIKGHYYSVNPIALNSIPKLFCENKREWNIFKSENFGDILTVEVGATCVGSIIQTYEPNKRVLKGAEKGYFKFGGSTTILFLEKDKVKIDNDILEQSKQGYECKVLFGETIGTKIL.

Catalysis depends on charge relay system; for autoendoproteolytic cleavage activity residues aspartate 113, histidine 169, and serine 256. Serine 256 (schiff-base intermediate with substrate; via pyruvic acid; for decarboxylase activity) is an active-site residue. At serine 256 the chain carries Pyruvic acid (Ser); by autocatalysis.

Belongs to the phosphatidylserine decarboxylase family. PSD-B subfamily. Prokaryotic type II sub-subfamily. In terms of assembly, heterodimer of a large membrane-associated beta subunit and a small pyruvoyl-containing alpha subunit. Pyruvate serves as cofactor. Post-translationally, is synthesized initially as an inactive proenzyme. Formation of the active enzyme involves a self-maturation process in which the active site pyruvoyl group is generated from an internal serine residue via an autocatalytic post-translational modification. Two non-identical subunits are generated from the proenzyme in this reaction, and the pyruvate is formed at the N-terminus of the alpha chain, which is derived from the carboxyl end of the proenzyme. The autoendoproteolytic cleavage occurs by a canonical serine protease mechanism, in which the side chain hydroxyl group of the serine supplies its oxygen atom to form the C-terminus of the beta chain, while the remainder of the serine residue undergoes an oxidative deamination to produce ammonia and the pyruvoyl prosthetic group on the alpha chain. During this reaction, the Ser that is part of the protease active site of the proenzyme becomes the pyruvoyl prosthetic group, which constitutes an essential element of the active site of the mature decarboxylase.

The protein localises to the cell membrane. It catalyses the reaction a 1,2-diacyl-sn-glycero-3-phospho-L-serine + H(+) = a 1,2-diacyl-sn-glycero-3-phosphoethanolamine + CO2. It functions in the pathway phospholipid metabolism; phosphatidylethanolamine biosynthesis; phosphatidylethanolamine from CDP-diacylglycerol: step 2/2. Functionally, catalyzes the formation of phosphatidylethanolamine (PtdEtn) from phosphatidylserine (PtdSer). The chain is Phosphatidylserine decarboxylase proenzyme from Clostridium botulinum (strain Alaska E43 / Type E3).